A 368-amino-acid polypeptide reads, in one-letter code: tRNA-specific 2-thiouridylase MnmA (368 aa).

Residues 11–18 (GMSGGVDS) and Met37 contribute to the ATP site. Positions 97–99 (NPD) are interaction with target base in tRNA. Cys102 (nucleophile) is an active-site residue. Cys102 and Cys199 are oxidised to a cystine. Gly127 lines the ATP pocket. The segment at 149 to 151 (KDQ) is interaction with tRNA. Catalysis depends on Cys199, which acts as the Cysteine persulfide intermediate. The interval 311 to 312 (RY) is interaction with tRNA.

This sequence belongs to the MnmA/TRMU family. In terms of assembly, interacts with TusE.

The protein resides in the cytoplasm. The catalysed reaction is S-sulfanyl-L-cysteinyl-[protein] + uridine(34) in tRNA + AH2 + ATP = 2-thiouridine(34) in tRNA + L-cysteinyl-[protein] + A + AMP + diphosphate + H(+). Functionally, catalyzes the 2-thiolation of uridine at the wobble position (U34) of tRNA(Lys), tRNA(Glu) and tRNA(Gln), leading to the formation of s(2)U34, the first step of tRNA-mnm(5)s(2)U34 synthesis. Sulfur is provided by IscS, via a sulfur-relay system. Binds ATP and its substrate tRNAs. The polypeptide is tRNA-specific 2-thiouridylase MnmA (Escherichia coli O1:K1 / APEC).